Reading from the N-terminus, the 613-residue chain is MPKLRSATTTHGRNMAGARALWRATGMTDQDFGKPIIAVVNSFTQFVPGHVHLKDLGQLVAREIEAAGGVAKEFNTIAVDDGIAMGHGGMLYSLPSRELIADSVEYMVNAHCADAMVCISNCDKITPGMLMAALRINIPVIFVSGGPMEAGKTKLSDQIIKLDLVDAMIQGADPKVSDAQSEQVERSACPTCGSCSGMFTANSMNCLTEALGLSQPGNGSLLATHSDREQLFKLAGQRIVTLAKRWYEQDDASALPRNIATKAAFENAMALDIAMGGSTNTVLHLLAAAQEAGVDFTMADIDRMSRKVPQLCKVAPSTQKYHMEDVHRAGGVVAILGQLEKAGLVHGDTRNVLGTSLVELLAEYDVSRQPSQEVVDFYRAGPAGIRTTKAFSQDCRWPELDLDRAEGCIRSLDNAYSLEGGLAVLAGNLALNGAIVKTAGVDEENLTFRGPARVFESQDTAVAGILDGTVKAGEVVVIRYEGPKGGPGMQEMLYPTTYLKSMGLGKACALITDGRFSGGTSGLSIGHVSPEAASGGTIGLVEDGDIINIDIPARSMVLEVADSVLAARRVAVEARGWKPLDRQRQVSFALRAYAMFATSADKGAVRDRSMLGE.

Asp-81 contacts Mg(2+). Cys-122 contacts [2Fe-2S] cluster. Positions 123 and 124 each coordinate Mg(2+). N6-carboxylysine is present on Lys-124. [2Fe-2S] cluster is bound at residue Cys-195. Residue Glu-491 coordinates Mg(2+). Ser-517 acts as the Proton acceptor in catalysis.

It belongs to the IlvD/Edd family. As to quaternary structure, homodimer. The cofactor is [2Fe-2S] cluster. Mg(2+) serves as cofactor.

It carries out the reaction (2R)-2,3-dihydroxy-3-methylbutanoate = 3-methyl-2-oxobutanoate + H2O. The catalysed reaction is (2R,3R)-2,3-dihydroxy-3-methylpentanoate = (S)-3-methyl-2-oxopentanoate + H2O. The protein operates within amino-acid biosynthesis; L-isoleucine biosynthesis; L-isoleucine from 2-oxobutanoate: step 3/4. It functions in the pathway amino-acid biosynthesis; L-valine biosynthesis; L-valine from pyruvate: step 3/4. Functionally, functions in the biosynthesis of branched-chain amino acids. Catalyzes the dehydration of (2R,3R)-2,3-dihydroxy-3-methylpentanoate (2,3-dihydroxy-3-methylvalerate) into 2-oxo-3-methylpentanoate (2-oxo-3-methylvalerate) and of (2R)-2,3-dihydroxy-3-methylbutanoate (2,3-dihydroxyisovalerate) into 2-oxo-3-methylbutanoate (2-oxoisovalerate), the penultimate precursor to L-isoleucine and L-valine, respectively. The polypeptide is Dihydroxy-acid dehydratase (Aeromonas hydrophila subsp. hydrophila (strain ATCC 7966 / DSM 30187 / BCRC 13018 / CCUG 14551 / JCM 1027 / KCTC 2358 / NCIMB 9240 / NCTC 8049)).